The sequence spans 753 residues: Glycerophosphodiester phosphodiesterase GDPDL6 (753 aa).

The N-terminal stretch at 1 to 17 (MLRFFILFSLFLHSSVA) is a signal peptide. GP-PDE domains lie at 41 to 339 (PAVV…SQSI) and 355 to 654 (ALVI…TRYL). Residues N304, N516, N603, and N715 are each glycosylated (N-linked (GlcNAc...) asparagine). The interval 707–729 (PPVAKLASNGTEGGPPQTPPRSG) is disordered. Residues 731–751 (VAIAANLSLSLLAMMALGLLY) traverse the membrane as a helical segment.

The protein belongs to the glycerophosphoryl diester phosphodiesterase family. In terms of tissue distribution, expressed in flowers and siliques.

It localises to the membrane. The enzyme catalyses a sn-glycero-3-phosphodiester + H2O = an alcohol + sn-glycerol 3-phosphate + H(+). This is Glycerophosphodiester phosphodiesterase GDPDL6 from Arabidopsis thaliana (Mouse-ear cress).